Here is an 872-residue protein sequence, read N- to C-terminus: Leucine--tRNA ligase (872 aa).

Positions P56 to H66 match the 'HIGH' region motif. The 'KMSKS' region motif lies at K629–S633. K632 contributes to the ATP binding site.

This sequence belongs to the class-I aminoacyl-tRNA synthetase family.

It localises to the cytoplasm. The catalysed reaction is tRNA(Leu) + L-leucine + ATP = L-leucyl-tRNA(Leu) + AMP + diphosphate. This chain is Leucine--tRNA ligase, found in Prochlorococcus marinus (strain MIT 9211).